A 288-amino-acid chain; its full sequence is Probable pectinesterase 56 (288 aa).

An N-terminal signal peptide occupies residues 1 to 27 (MAMTSTMQLLVLSFLVIASLFLGATVA). N-linked (GlcNAc...) asparagine glycans are attached at residues asparagine 55 and asparagine 95. 2 residues coordinate substrate: threonine 120 and glutamine 150. Residue aspartate 173 is the Proton donor of the active site. Aspartate 194 functions as the Nucleophile in the catalytic mechanism. An N-linked (GlcNAc...) asparagine glycan is attached at asparagine 242. The substrate site is built by arginine 262 and tryptophan 264.

The protein belongs to the pectinesterase family.

The protein localises to the secreted. It localises to the cell wall. It catalyses the reaction [(1-&gt;4)-alpha-D-galacturonosyl methyl ester](n) + n H2O = [(1-&gt;4)-alpha-D-galacturonosyl](n) + n methanol + n H(+). Its pathway is glycan metabolism; pectin degradation; 2-dehydro-3-deoxy-D-gluconate from pectin: step 1/5. Functionally, acts in the modification of cell walls via demethylesterification of cell wall pectin. This chain is Probable pectinesterase 56 (PME56), found in Arabidopsis thaliana (Mouse-ear cress).